The sequence spans 124 residues: Large ribosomal subunit protein bL12 (124 aa).

This sequence belongs to the bacterial ribosomal protein bL12 family. As to quaternary structure, homodimer. Part of the ribosomal stalk of the 50S ribosomal subunit. Forms a multimeric L10(L12)X complex, where L10 forms an elongated spine to which 2 to 4 L12 dimers bind in a sequential fashion. Binds GTP-bound translation factors.

In terms of biological role, forms part of the ribosomal stalk which helps the ribosome interact with GTP-bound translation factors. Is thus essential for accurate translation. This is Large ribosomal subunit protein bL12 from Bacteroides fragilis (strain ATCC 25285 / DSM 2151 / CCUG 4856 / JCM 11019 / LMG 10263 / NCTC 9343 / Onslow / VPI 2553 / EN-2).